The chain runs to 162 residues: uncharacterized protein (162 aa).

A signal peptide spans 1–21 (MRLCGLLIFLSYIVYVDNAVT).

This is an uncharacterized protein from Caenorhabditis elegans.